We begin with the raw amino-acid sequence, 2515 residues long: Probable maltase-glucoamylase 2 (2515 aa).

At 1–9 (MARKLSVLE) the chain is on the cytoplasmic side. The helical transmembrane segment at 10–30 (VLLIIFCLIVVTIDILLLLLV) threads the bilayer. Topologically, residues 31 to 482 (LEETSDTSFT…DGVWIEMNEV (452 aa)) are lumenal. Residues 41–88 (PECPEIPQSERIDCTPDQEVTEDICRWQYKCCWSPVADANVPRCFFPW) form the P-type 1 domain. Disulfide bonds link Cys-43–Cys-72, Cys-54–Cys-71, and Cys-65–Cys-84. The segment at 152 to 865 (SHENINLVDG…MDKQPANFIV (714 aa)) is maltase. Asn-167 carries N-linked (GlcNAc...) asparagine glycosylation. Tyr-371 carries the post-translational modification Sulfotyrosine. Asn-421 carries an N-linked (GlcNAc...) asparagine glycan. The active-site Nucleophile is the Glu-478. Glu-481 is an active-site residue. Intrachain disulfides connect Cys-608/Cys-619, Cys-916/Cys-933, and Cys-928/Cys-946. Residue Asn-613 is glycosylated (N-linked (GlcNAc...) asparagine). In terms of domain architecture, P-type 2 spans 904-950 (WNLPVSDLEKFNCYPDDPTASEESCRQRGCLWEDTSTPGVPTCYYDT). Residues 1023-1766 (PLNTPPQPVG…GVNTYVTQVS (744 aa)) are glucoamylase. Position 1238 is a sulfotyrosine (Tyr-1238). Asp-1375 (nucleophile) is an active-site residue. Residue Glu-1378 is part of the active site. Disordered stretches follow at residues 1816 to 1901 (TPTK…PITT), 1994 to 2015 (STTV…STNA), and 2037 to 2091 (TVPD…SSTT). Residues 1817–1831 (PTKTSTIPMSSHPSP) show a composition bias toward polar residues. The span at 1832-1901 (STTNATSSET…STNATVPITT (70 aa)) shows a compositional bias: low complexity. A glycan (N-linked (GlcNAc...) asparagine) is linked at Asn-2249.

The protein belongs to the glycosyl hydrolase 31 family.

The protein resides in the membrane. It carries out the reaction Hydrolysis of terminal (1-&gt;4)-linked alpha-D-glucose residues successively from non-reducing ends of the chains with release of beta-D-glucose.. The polypeptide is Probable maltase-glucoamylase 2 (Homo sapiens (Human)).